An 84-amino-acid polypeptide reads, in one-letter code: Serine palmitoyltransferase-regulating protein TSC3 (84 aa).

The helical transmembrane segment at 63–83 (LHTIFLVVVSLSLFGLLKYIF) threads the bilayer.

It localises to the endoplasmic reticulum membrane. Functionally, stimulates the activity of serine palmitoyltransferase (SPT), and thus plays a role in the biosynthesis of sphingolipids. This Kluyveromyces lactis (strain ATCC 8585 / CBS 2359 / DSM 70799 / NBRC 1267 / NRRL Y-1140 / WM37) (Yeast) protein is Serine palmitoyltransferase-regulating protein TSC3 (TSC3).